Here is an 855-residue protein sequence, read N- to C-terminus: Pre-mRNA-splicing factor SYF1 (855 aa).

HAT repeat units lie at residues 15–47, 48–80, 90–122, 124–158, 160–192, 198–230, 235–268, 270–305, and 369–407; these read LVFEEEDLPYEEEIMRNQFSVKCWLRYIEFKQG, APKPRLNQLYERALKLLPCSYKLWYRYLKARRA, PAYEDVNNCHERAFVFMHKMPRLWLDYCQFLMD, GRVTHTRRTFDRALRALPITQHSRIWPLYLRFLRS, PLPETAVRGYRRFLKLSPESAEEYIEYLKSSDR, QRLATVVNDERFVSKAGKSNYQLWHELCDLISQ, VQSLNVDAIIRGGLTRFTDQLGKLWCSLADYYIR, GHFEKARDVYEEAIRTVMTVRDFTQVFDSYAQFEES, and GRPREIINTYTEAVQTVDPFKATGKPHTLWVAFAKFYED. Lysine 420 is subject to N6-acetyllysine. HAT repeat units lie at residues 498-530, 532-566, 571-605, 643-677, and 679-713; these read GTFQSTKAVYDRILDLRIATPQIVINYAMFLEE, KYFEESFKAYERGISLFKWPNVSDIWSTYLTKFIA, RKLERARDLFEQALDGCPPKYAKTLYLLYAQLEEE, YGVTHTRGIYQKAIEVLSDEHAREMCLRFADMECK, and GEIDRARAIYSFCSQICDPRTTGAFWQTWKDFEVR. The interval 810–855 is disordered; it reads LAQQVNPEEIQLGEDEDEDEMDLEPNEVRLEQQSVPAAVFGSLKED. The segment covering 820–834 has biased composition (acidic residues); the sequence is QLGEDEDEDEMDLEP. Serine 851 is subject to Phosphoserine.

This sequence belongs to the crooked-neck family. As to quaternary structure, associates with RNA polymerase II, the TCR-specific proteins CKN1/CSA and ERCC6/CSB, and XPA. Identified in the spliceosome C complex. Component of the XAB2 complex, a multimeric protein complex composed of XAB2, PRPF19, AQR, ZNF830, ISY1, and PPIE. Identified in a pentameric intron-binding (IB) complex composed of AQR, XAB2, ISY1, ZNF830 and PPIE that is incorporated into the spliceosome as a preassembled complex. The IB complex does not contain PRPF19.

Its subcellular location is the nucleus. Functionally, involved in pre-mRNA splicing as component of the spliceosome. Involved in transcription-coupled repair (TCR), transcription and pre-mRNA splicing. The chain is Pre-mRNA-splicing factor SYF1 (XAB2) from Homo sapiens (Human).